The primary structure comprises 439 residues: Probable tRNA pseudouridine synthase D (439 aa).

Asp-87 (nucleophile) is an active-site residue. Positions 166–391 (GVPNFFGIQR…SKGLRREILL (226 aa)) constitute a TRUD domain.

The protein belongs to the pseudouridine synthase TruD family.

It carries out the reaction uridine(13) in tRNA = pseudouridine(13) in tRNA. In terms of biological role, could be responsible for synthesis of pseudouridine from uracil-13 in transfer RNAs. The polypeptide is Probable tRNA pseudouridine synthase D (Methanococcoides burtonii (strain DSM 6242 / NBRC 107633 / OCM 468 / ACE-M)).